We begin with the raw amino-acid sequence, 320 residues long: Adenosine receptor A3 (320 aa).

The Extracellular segment spans residues 1 to 16 (MKANNTTTSALWLQIT). N-linked (GlcNAc...) asparagine glycosylation is found at N4 and N5. A helical membrane pass occupies residues 17 to 39 (YITMEAAIGLCAVVGNMLVIWVV). Over 40 to 50 (KLNRTLRTTTF) the chain is Cytoplasmic. The chain crosses the membrane as a helical span at residues 51–74 (YFIVSLALADIAVGVLVIPLAIAV). At 75–86 (SLEVQMHFYACL) the chain is on the extracellular side. C85 and C168 form a disulfide bridge. Residues 87–108 (FMSCVLLVFTHASIMSLLAIAV) form a helical membrane-spanning segment. Topologically, residues 109–128 (DRYLRVKLTVRYRTVTTQRR) are cytoplasmic. Residues 129-150 (IWLFLGLCWLVSFLVGLTPMFG) traverse the membrane as a helical segment. Residues 151–179 (WNRKVTLELSQNSSTLSCHFRSVVGLDYM) lie on the Extracellular side of the membrane. The chain crosses the membrane as a helical span at residues 180 to 200 (VFFSFITWILIPLVVMCIIYL). The Cytoplasmic portion of the chain corresponds to 201–233 (DIFYIIRNKLSQNLTGFRETRAFYGREFKTAKS). The helical transmembrane segment at 234–257 (LFLVLFLFALCWLPLSIINFVSYF) threads the bilayer. The Extracellular portion of the chain corresponds to 258 to 263 (NVKIPE). The helical transmembrane segment at 264 to 286 (IAMCLGILLSHANSMMNPIVYAC) threads the bilayer. Topologically, residues 287–320 (KIKKFKETYFVILRACRLCQTSDSLDSNLEQTTE) are cytoplasmic. The S-palmitoyl cysteine moiety is linked to residue C305. Phosphothreonine is present on residues T307, T318, and T319.

This sequence belongs to the G-protein coupled receptor 1 family. In terms of processing, phosphorylation on Thr-318 and Thr-319 may be crucial for rapid desensitization. Phosphorylation on Thr-318 may be necessary for phosphorylation on Thr-319 to occur. In terms of tissue distribution, testis, particularly in spermatocytes and spermatids but not in spermatogonia. Low levels in the brain.

Its subcellular location is the cell membrane. Receptor for adenosine. The activity of this receptor is mediated by G proteins which inhibits adenylyl cyclase. May play a role during reproduction. The chain is Adenosine receptor A3 (Adora3) from Rattus norvegicus (Rat).